Consider the following 73-residue polypeptide: Small ribosomal subunit protein bS18 (73 aa).

It belongs to the bacterial ribosomal protein bS18 family. In terms of assembly, part of the 30S ribosomal subunit. Forms a tight heterodimer with protein bS6.

Its function is as follows. Binds as a heterodimer with protein bS6 to the central domain of the 16S rRNA, where it helps stabilize the platform of the 30S subunit. The protein is Small ribosomal subunit protein bS18 of Prochlorococcus marinus (strain SARG / CCMP1375 / SS120).